Consider the following 388-residue polypeptide: GTPase Obg (388 aa).

Residues 1 to 159 (MKFVDEAVIR…RSLKLELLLL (159 aa)) enclose the Obg domain. One can recognise an OBG-type G domain in the interval 160 to 333 (ADVGLLGMPN…LATKLLDFIQ (174 aa)). GTP is bound by residues 166-173 (GMPNAGKS), 191-195 (FTTLV), 213-216 (DIPG), 283-286 (NKAD), and 314-316 (SAY). S173 and T193 together coordinate Mg(2+).

This sequence belongs to the TRAFAC class OBG-HflX-like GTPase superfamily. OBG GTPase family. As to quaternary structure, monomer. Mg(2+) serves as cofactor.

Its subcellular location is the cytoplasm. Functionally, an essential GTPase which binds GTP, GDP and possibly (p)ppGpp with moderate affinity, with high nucleotide exchange rates and a fairly low GTP hydrolysis rate. Plays a role in control of the cell cycle, stress response, ribosome biogenesis and in those bacteria that undergo differentiation, in morphogenesis control. The polypeptide is GTPase Obg (Shewanella sp. (strain MR-4)).